We begin with the raw amino-acid sequence, 362 residues long: Diphosphomevalonate decarboxylase (362 aa).

Residues 17–20, Arg-72, 150–155, and Thr-206 each bind (R)-5-diphosphomevalonate; these read YWGK and SGSACR.

The protein belongs to the diphosphomevalonate decarboxylase family. In terms of assembly, homodimer.

It catalyses the reaction (R)-5-diphosphomevalonate + ATP = isopentenyl diphosphate + ADP + phosphate + CO2. It functions in the pathway isoprenoid biosynthesis; isopentenyl diphosphate biosynthesis via mevalonate pathway; isopentenyl diphosphate from (R)-mevalonate: step 3/3. In terms of biological role, diphosphomevalonate decarboxylase; part of the second module of ergosterol biosynthesis pathway that includes the middle steps of the pathway. MVD1 converts diphosphomevalonate into isopentenyl diphosphate. The second module is carried out in the vacuole and involves the formation of farnesyl diphosphate, which is also an important intermediate in the biosynthesis of ubiquinone, dolichol, heme and prenylated proteins. Activity by the mevalonate kinase ERG12 first converts mevalonate into 5-phosphomevalonate. 5-phosphomevalonate is then further converted to 5-diphosphomevalonate by the phosphomevalonate kinase ERG8. The diphosphomevalonate decarboxylase MVD then produces isopentenyl diphosphate. The isopentenyl-diphosphate delta-isomerase IDI1 then catalyzes the 1,3-allylic rearrangement of the homoallylic substrate isopentenyl (IPP) to its highly electrophilic allylic isomer, dimethylallyl diphosphate (DMAPP). Finally the farnesyl diphosphate synthase ERG20 catalyzes the sequential condensation of isopentenyl pyrophosphate with dimethylallyl pyrophosphate, and then with the resultant geranylpyrophosphate to the ultimate product farnesyl pyrophosphate. The chain is Diphosphomevalonate decarboxylase from Candida albicans (strain SC5314 / ATCC MYA-2876) (Yeast).